The sequence spans 920 residues: B3 domain-containing protein REM17 (920 aa).

3 DNA-binding regions (TF-B3) span residues asparagine 12–serine 105, arginine 153–lysine 250, and cysteine 267–threonine 361. Disordered regions lie at residues aspartate 405–valine 438, leucine 540–serine 562, and aspartate 585–histidine 614. Residues asparagine 423–serine 432 show a composition bias toward basic and acidic residues. Residues serine 436 to threonine 531 constitute a DNA-binding region (TF-B3 4). 2 consecutive DNA-binding regions (TF-B3) follow at residues serine 616–glutamate 714 and tyrosine 727–alanine 823. Over residues asparagine 842–aspartate 852 the composition is skewed to low complexity. The disordered stretch occupies residues asparagine 842 to isoleucine 870.

It localises to the nucleus. In Arabidopsis thaliana (Mouse-ear cress), this protein is B3 domain-containing protein REM17 (REM17).